The sequence spans 262 residues: Putative dimethyl sulfoxide reductase iron-sulfur subunit B (262 aa).

3 4Fe-4S ferredoxin-type domains span residues 4-34, 62-93, and 94-123; these read YGLVIDQERCIGCQSCSLTCKQENNVPMGQF, LEMTYQPTACQHCENAPCVKVCPVNATYTRDD, and GIVEIDYDKCMGCRYCMAACPYNARVFNWD. Positions 13, 16, 19, 23, 71, 74, 79, 83, 103, 106, 109, 113, 147, 150, 162, and 166 each coordinate [4Fe-4S] cluster. The tract at residues 209–262 is disordered; sequence NGEMSPGRPWKSKKLESELDDDEAAKAARRRSGSVENGYDVTPHVPAETAGGDD.

As to quaternary structure, probable multiprotein complex that likely consists of DmsA, DmsB and DmsC. Requires [4Fe-4S] cluster as cofactor.

The protein resides in the cell membrane. Its function is as follows. Dimethyl sulfoxide (DMSO) reductase catalyzes the reduction of dimethyl sulfoxide (DMSO) to dimethyl sulfide (DMS) during anaerobic respiration; it can also use trimethylamine N-oxide (TMAO) as terminal electron acceptor. Subunit B is proposed to be involved in electron transfer. The polypeptide is Putative dimethyl sulfoxide reductase iron-sulfur subunit B (dmsB) (Halobacterium salinarum (strain ATCC 700922 / JCM 11081 / NRC-1) (Halobacterium halobium)).